The primary structure comprises 114 residues: Large ribosomal subunit protein bL19 (114 aa).

Belongs to the bacterial ribosomal protein bL19 family.

Functionally, this protein is located at the 30S-50S ribosomal subunit interface and may play a role in the structure and function of the aminoacyl-tRNA binding site. The sequence is that of Large ribosomal subunit protein bL19 from Clostridium acetobutylicum (strain ATCC 824 / DSM 792 / JCM 1419 / IAM 19013 / LMG 5710 / NBRC 13948 / NRRL B-527 / VKM B-1787 / 2291 / W).